The sequence spans 1678 residues: Hispidin synthase (1678 aa).

Positions 33–453 are adenylation (A) domain; the sequence is GEHRWSYREL…WLGRNTDFIQ (421 aa). The Carrier 1 domain maps to 586 to 661; the sequence is DELSNTVKHI…SLSNAVYAKL (76 aa). Ser620 bears the O-(pantetheine 4'-phosphoryl)serine mark. The 426-residue stretch at 683–1108 folds into the Ketosynthase family 3 (KS3) domain; sequence GKEIVVVGQA…GTLGGIVLEA (426 aa). Residues Cys852, His988, and His1029 each act as for beta-ketoacyl synthase activity in the active site. The segment at 1201–1499 is malonyl-CoA:ACP transacylase (MAT) domain; that stretch reads YKRGALAFAF…VAWSLLLSNG (299 aa). The segment at 1562–1582 is disordered; it reads EETLSSGSSTPTLENTDLDSG. Residues 1564–1576 show a composition bias toward polar residues; the sequence is TLSSGSSTPTLEN. In terms of domain architecture, Carrier 2 spans 1597–1672; that stretch reads DDLRDSIVSS…EMVSNLVEQA (76 aa). At Ser1632 the chain carries O-(pantetheine 4'-phosphoryl)serine.

In the N-terminal section; belongs to the NRP synthetase family.

It catalyses the reaction (E)-caffeate + 2 malonyl-CoA + ATP + H(+) = hispidin + AMP + 2 CO2 + diphosphate + 2 CoA. It participates in secondary metabolite biosynthesis. PKS-NRPS hybrid synthetase; part of the gene cluster that mediates the fungal bioluminescence cycle. Performs the biosynthesis of hispidin from caffeic acid by two cycles of addition of malonyl units followed by lactonization. The fungal bioluminescence cycle begins with the hispidin synthetase that catalyzes the formation of hispidin which is further hydroxylated by the hispidin-3-hydroxylase, yielding the fungal luciferin 3-hydroxyhispidin. The luciferase then produces an endoperoxide as a high-energy intermediate with decomposition that yields oxyluciferin (also known as caffeoylpyruvate) and light emission. Oxyluciferin can be recycled to caffeic acid by caffeoylpyruvate hydrolase. The chain is Hispidin synthase from Neonothopanus nambi (Agaricus nambi).